Consider the following 299-residue polypeptide: Putative beta-glucosidase 2 (299 aa).

The N-terminal stretch at 1 to 16 (MLHCITTIFLSISRMT) is a signal peptide. Position 49-50 (49-50 (NE)) interacts with a beta-D-glucoside. Residue Glu50 is the Proton donor of the active site. A disulfide bridge links Cys69 with Cys72. N-linked (GlcNAc...) asparagine glycosylation is found at Asn71 and Asn76. Tyr189 lines the a beta-D-glucoside pocket. An N-linked (GlcNAc...) asparagine glycan is attached at Asn222. Glu255 lines the a beta-D-glucoside pocket. Glu255 functions as the Nucleophile in the catalytic mechanism. Asn290 carries N-linked (GlcNAc...) asparagine glycosylation.

It belongs to the glycosyl hydrolase 1 family.

It carries out the reaction Hydrolysis of terminal, non-reducing beta-D-glucosyl residues with release of beta-D-glucose.. The chain is Putative beta-glucosidase 2 from Arabidopsis thaliana (Mouse-ear cress).